A 317-amino-acid polypeptide reads, in one-letter code: MRSSRSAKVSLVGAGNIGGALAHMLGASQVVKELVLVDVAGGMTEGKVLDVGQALALLGSDVYITGGSDYAAIEHSDAVVVTAGIPRKEGMSREDLLNTNAAVVRNIAENIAKYSPGALVIVVTNPLDAMVWCMYKYSGLPANRVVGMAGVLDSARFSFFLARHMNVSVSSVSAMVLGGHGDLMLPLLRYSTVGGVPVESLIESGRLNRGDIAAIVERTRKGGEEIVKLLKTGSAYCAPAASCAHMLESYVRDKRSIMPCSAYLDGQYGVRDLFVGVPVIIGEKGVEEVVEFPLTAEEQAVFDQSVELIRGSVSAIS.

NAD(+)-binding positions include 13 to 18 (GAGNIG) and D38. Residues R87 and R93 each contribute to the substrate site. Residues N100 and 123–125 (VTN) each bind NAD(+). 2 residues coordinate substrate: N125 and R156. Residue H180 is the Proton acceptor of the active site.

This sequence belongs to the LDH/MDH superfamily. MDH type 3 family.

The enzyme catalyses (S)-malate + NAD(+) = oxaloacetate + NADH + H(+). Functionally, catalyzes the reversible oxidation of malate to oxaloacetate. This Anaplasma marginale (strain Florida) protein is Malate dehydrogenase.